A 498-amino-acid polypeptide reads, in one-letter code: TORTIFOLIA1-like protein 5 (498 aa).

5 HEAT repeats span residues 56 to 93 (ETFS…SHGD), 97 to 134 (PHLS…NITG), 136 to 173 (PFSI…AADE), 177 to 214 (EQLQ…AVGG), and 219 to 257 (KAVL…VEEE). Positions 296-423 (EGDSTEVSES…SSSQAKSNAE (128 aa)) are disordered. The segment covering 300–322 (TEVSESSSSSKSASSGLSATSGK) has biased composition (low complexity). The segment covering 343 to 366 (NDVEPLDRGDTPKDVEQEAVVSKE) has biased composition (basic and acidic residues). Residues 390 to 400 (NGSNKSQVVQS) are compositionally biased toward polar residues. Ser-426 is modified (phosphoserine).

In Arabidopsis thaliana (Mouse-ear cress), this protein is TORTIFOLIA1-like protein 5.